The following is a 412-amino-acid chain: MAEGEDGTWWRSWLQQSYSSVRDKSAEALEFMKRDLTEFTRVVQHDTACTIAATASVVKDKLVVEGSSGTTDKVKKGLSNFLGVISDTFAPSPDKTIDCDVITLMATPSGTTELYDSTKARLYSLQSDPATYCNEPDGSPAEFDAWLAYWDPEHRKAEISELLVTSPSIRALYTKMVPAAVSHSEFWQRYFYKVHQLEQEEARRDALKQRADQSVHSEEPQWEEEEEDFVGAASAPNFKLEEKYVISPPTIPTLHVEDKSEKMAELNRDHTSITSPSESSESISPITQIANPEYIEQTATKESSPRPLTVKEKNGAGTDESSAHAPVEQITGKSNAQIGTHREDPPSDLRVFELNSDSGKSTPSNNGQKGSSTDVSEDWEKDFDMTEEEVQMALSRVEVSGEVDDEDWENWE.

The BSD domain occupies 146–198; it reads WLAYWDPEHRKAEISELLVTSPSIRALYTKMVPAAVSHSEFWQRYFYKVHQLE. 2 stretches are compositionally biased toward basic and acidic residues: residues 208 to 219 and 255 to 271; these read KQRADQSVHSEE and HVED…RDHT. Disordered regions lie at residues 208-228 and 255-383; these read KQRA…EEED and HVED…EKDF. Residues 272–287 show a composition bias toward low complexity; the sequence is SITSPSESSESISPIT. The span at 340-351 shows a compositional bias: basic and acidic residues; sequence THREDPPSDLRV. Positions 355 to 374 are enriched in polar residues; sequence NSDSGKSTPSNNGQKGSSTD.

This chain is BSD domain-containing protein 1 (bsdc1), found in Xenopus tropicalis (Western clawed frog).